Consider the following 385-residue polypeptide: Mannitol-1-phosphate 5-dehydrogenase (385 aa).

3–14 (AVHFGAGNIGRG) serves as a coordination point for NAD(+).

The protein belongs to the mannitol dehydrogenase family.

The catalysed reaction is D-mannitol 1-phosphate + NAD(+) = beta-D-fructose 6-phosphate + NADH + H(+). In Geobacillus thermodenitrificans (strain NG80-2), this protein is Mannitol-1-phosphate 5-dehydrogenase.